The following is a 2098-amino-acid chain: Non-reducing polyketide synthase crz7 (2098 aa).

Residues 8-243 form the Starter acyltransferase (SAT) domain; it reads ILFGDQTVDP…IKLPITAAFH (236 aa). Residues 364-789 enclose the Ketosynthase family 3 (KS3) domain; the sequence is SSDIAIIGFA…GGNTSLLLED (426 aa). Active-site for beta-ketoacyl synthase activity residues include Cys-532, His-667, and His-706. The region spanning 887 to 1211 is the Malonyl-CoA:ACP transacylase (MAT) domain; that stretch reads IFLFTGQGSQ…IANAYNSGVK (325 aa). The segment at 1270-1404 is N-terminal hotdog fold; the sequence is TCLQGVENET…CTVMYGDGQQ (135 aa). The PKS/mFAS DH domain occupies 1270 to 1578; sequence TCLQGVENET…FQQMKRTTLQ (309 aa). Residue His-1305 is the Proton acceptor; for dehydratase activity of the active site. The tract at residues 1431–1578 is C-terminal hotdog fold; sequence IHRMLKEMIY…FQQMKRTTLQ (148 aa). Asp-1491 serves as the catalytic Proton donor; for dehydratase activity. The Carrier 1 domain maps to 1613-1690; the sequence is QSPSAGFSKV…ELRAFFLDKM (78 aa). At Ser-1650 the chain carries O-(pantetheine 4'-phosphoryl)serine. Positions 1693-1725 are disordered; the sequence is PQATANDDDSDDSSEDEDPGYSRSQSNSTISTP. The segment covering 1698–1711 has biased composition (acidic residues); that stretch reads NDDDSDDSSEDEDP. The span at 1714 to 1724 shows a compositional bias: polar residues; that stretch reads SRSQSNSTIST. The Carrier 2 domain occupies 1725 to 1802; sequence PEEPDVVSIL…DVQKALGPTS (78 aa). An O-(pantetheine 4'-phosphoryl)serine modification is found at Ser-1762. The thioesterase (TE) domain stretch occupies residues 1844–2080; sequence LFLLPDGAGS…VSGNHFSIMF (237 aa).

Requires pantetheine 4'-phosphate as cofactor.

The protein operates within secondary metabolite biosynthesis. Its function is as follows. Non-reducing polyketide synthase; part of the gene cluster that mediates the biosynthesis of the red pigment cristazarin, a naphthazarin derivative. The polyketide product of crz7 is likely 2-acetyl-1,3,6,8-tetrahydoxynaphthalene (AT4HN) from which a probable biosynthetic route of cristazarin can be deduced. The presence of two O-methyltransferases (crz1 and crz2), an enoyl reductase (crz5), an oxidase (crz8), and a short-chain dehydrogenase (crz9) encoded in the cristazarin biosynthetic cluster is consistent with methylation of a hydroxyl group, addition of two hydroxyl groups to the naphthalene core ring, and reduction of the acetyl side chain. The sequence is that of Non-reducing polyketide synthase crz7 from Cladonia metacorallifera (Lichen-forming fungus).